The primary structure comprises 243 residues: NAD-dependent protein deacetylase (243 aa).

Positions 1 to 243 (MKHDLETLKH…VSVVKSLMTE (243 aa)) constitute a Deacetylase sirtuin-type domain. Residues Ala24, Phe35, Arg36, Gln105, Ile107, Asp108, and His123 each contribute to the NAD(+) site. Nicotinamide is bound at residue Phe35. Nicotinamide contacts are provided by Ile107 and Asp108. Catalysis depends on His123, which acts as the Proton acceptor. Zn(2+)-binding residues include Cys131, Cys134, Cys151, and Cys154. The NAD(+) site is built by Ser192, Ser193, Asn215, and Asp232.

Belongs to the sirtuin family. Class U subfamily. It depends on Zn(2+) as a cofactor.

It localises to the cytoplasm. It catalyses the reaction N(6)-acetyl-L-lysyl-[protein] + NAD(+) + H2O = 2''-O-acetyl-ADP-D-ribose + nicotinamide + L-lysyl-[protein]. NAD-dependent protein deacetylase which modulates the activities of several enzymes which are inactive in their acetylated form. The sequence is that of NAD-dependent protein deacetylase from Staphylococcus aureus (strain COL).